The sequence spans 63 residues: Large ribosomal subunit protein bL35 (63 aa).

The protein belongs to the bacterial ribosomal protein bL35 family.

The protein is Large ribosomal subunit protein bL35 of Campylobacter jejuni (strain RM1221).